We begin with the raw amino-acid sequence, 104 residues long: uncharacterized protein (104 aa).

This is an uncharacterized protein from Acidianus two-tailed virus (ATV).